Reading from the N-terminus, the 193-residue chain is Potassium-transporting ATPase KdpC subunit (193 aa).

A helical membrane pass occupies residues 14–34; it reads ITFTFLVLCGLVYPLIVTGIA.

This sequence belongs to the KdpC family. The system is composed of three essential subunits: KdpA, KdpB and KdpC.

It localises to the cell membrane. Its function is as follows. Part of the high-affinity ATP-driven potassium transport (or Kdp) system, which catalyzes the hydrolysis of ATP coupled with the electrogenic transport of potassium into the cytoplasm. This subunit acts as a catalytic chaperone that increases the ATP-binding affinity of the ATP-hydrolyzing subunit KdpB by the formation of a transient KdpB/KdpC/ATP ternary complex. This Bacillus cereus (strain ATCC 10987 / NRS 248) protein is Potassium-transporting ATPase KdpC subunit.